The chain runs to 291 residues: Small ribosomal subunit protein uS2 (291 aa).

Positions 231–291 are disordered; the sequence is NRGSGTTEAP…AAEAPAEDAK (61 aa). The span at 246–259 shows a compositional bias: basic and acidic residues; it reads EWERELLEGSKAEE. The segment covering 260-285 has biased composition (low complexity); the sequence is AAAAAPAENAEAPAAPAAEAPAAAEA.

It belongs to the universal ribosomal protein uS2 family.

The polypeptide is Small ribosomal subunit protein uS2 (Pseudarthrobacter chlorophenolicus (strain ATCC 700700 / DSM 12829 / CIP 107037 / JCM 12360 / KCTC 9906 / NCIMB 13794 / A6) (Arthrobacter chlorophenolicus)).